We begin with the raw amino-acid sequence, 91 residues long: PqqA binding protein (91 aa).

Belongs to the PqqD family. In terms of assembly, monomer. Interacts with PqqE.

Its pathway is cofactor biosynthesis; pyrroloquinoline quinone biosynthesis. In terms of biological role, functions as a PqqA binding protein and presents PqqA to PqqE, in the pyrroloquinoline quinone (PQQ) biosynthetic pathway. The chain is PqqA binding protein from Pseudomonas fluorescens (strain SBW25).